Consider the following 1030-residue polypeptide: MNNGKVRIYELSKELNLDNKDVLAVCDRLEIPYKSYSSTLSEEQVVQVRQVLAGAAPSEPVAAASAADSPKAERKQEIVSVRRPTPQAAGGAKPEIVGRPTASEKPQAERPNIVAPPRRPAAANEPAKAPIKPARPEKSAEKPEIVTPRPPAPAASAEPAKSPSRPAPAATPRPVAETKKPKPAAAELLRKPEIVRRSEAKPERTSEAPTPRPKIERRPEQTGPARPQLGQPVAGNGVSKPAKPVKPIELVAPPSRPKVAASASGVPAAASRVLPNKPQKPTAPGGPELKQRPKPAAPASGEDLAATVDVFQPVPPLELRRPTAPARPARPRKGWEEEEDERAAANRKAGNKAAAKAKRRQLIQDDDDDDLLTAEQELAAADALNLAMSLARPSKPKVPQAKPAVAVMPTKGRKPRRESARERQHRRRMEREQKPVRPELISLRSSMTVQELAQLMVVPETDIIKSLFFKGIAATVTQSLDVATIEQVAEEFGILVEQETEESGARKTTQMVEDADAESLQTRPPVVTVMGHVDHGKTTLLDAIRKTRVAAGEAGGITQHIGAYHVDVEHNGDQHQIVFLDTPGHEAFTAMRARGARVTDIAILVVAADDGVRPQTLEAISHAKAAEVPLIVAINKCDKEEAQPDRVKQELTEYGLVPEEWGGETVMVPVSAIKGENIDQLLEMILLVTEVEELVANPDRAARGTVIEAHLDKARGPVATLLVQNGTLRVGDVLVAGSVLGKVRAMVDDRGDRVEAATPSFAVEVLGLGDVPAAGDEFEVYSDEKSARAVATSRADEQRQSRLQQAMASRRVSLGTVSAQAQEGELKELNLILKADVQGSVEAILGSLEQLPQKQVQVRVLLAAPGEITETDVDLAAASGAVIVGFNTTLASGAKRAADEAGVDVRDYDIIYKLLEDIQAAMEGLLEPELVEEPLGQVEVRAVFSIGRGAVAGCYVQSGKAIRNCNIRVRRGSNLVYTGTLDSLKRMKEDVKEVNSGYECGIGLDSFSAWQEGDIIETYRMVTKRRTLEV.

Low complexity-rich tracts occupy residues A56 to S69 and P111 to K132. 2 disordered regions span residues A56–Q361 and S394–K434. Positions A134–E144 are enriched in basic and acidic residues. A compositionally biased stretch (low complexity) spans A154–S164. Positions L188–S206 are enriched in basic and acidic residues. Low complexity predominate over residues V259–V273. A tr-type G domain is found at T522–V695. The tract at residues G531–T538 is G1. G531–T538 lines the GTP pocket. A G2 region spans residues G556 to H560. Residues D581–G584 are G3. GTP-binding positions include D581–H585 and N635–D638. Residues N635–D638 are G4. Residues S671 to I673 form a G5 region.

The protein belongs to the TRAFAC class translation factor GTPase superfamily. Classic translation factor GTPase family. IF-2 subfamily.

It localises to the cytoplasm. Its function is as follows. One of the essential components for the initiation of protein synthesis. Protects formylmethionyl-tRNA from spontaneous hydrolysis and promotes its binding to the 30S ribosomal subunits. Also involved in the hydrolysis of GTP during the formation of the 70S ribosomal complex. The chain is Translation initiation factor IF-2 from Synechococcus elongatus (strain ATCC 33912 / PCC 7942 / FACHB-805) (Anacystis nidulans R2).